A 255-amino-acid chain; its full sequence is NAD kinase (255 aa).

Catalysis depends on aspartate 44, which acts as the Proton acceptor. Residues aspartate 44–glycine 45, histidine 49, asparagine 114–glutamate 115, aspartate 144, alanine 152, serine 155–serine 160, and glutamine 216 contribute to the NAD(+) site.

The protein belongs to the NAD kinase family. A divalent metal cation is required as a cofactor.

Its subcellular location is the cytoplasm. The catalysed reaction is NAD(+) + ATP = ADP + NADP(+) + H(+). Functionally, involved in the regulation of the intracellular balance of NAD and NADP, and is a key enzyme in the biosynthesis of NADP. Catalyzes specifically the phosphorylation on 2'-hydroxyl of the adenosine moiety of NAD to yield NADP. In Rickettsia akari (strain Hartford), this protein is NAD kinase.